The sequence spans 360 residues: Hydroxyproline O-arabinosyltransferase RDN2 (360 aa).

Residues 13-33 form a helical; Signal-anchor membrane-spanning segment; that stretch reads VLGSSFATYNLVTMIIHYGSA.

The protein localises to the golgi apparatus membrane. The enzyme catalyses trans-4-hydroxy-L-prolyl-[protein] + UDP-beta-L-arabinofuranose = O-(beta-L-arabinofuranosyl)-trans-4-hydroxy-L-prolyl-[protein] + UDP + H(+). In terms of biological role, glycosyltransferase involved in the O-arabinosylation of several proteins including extensins and small signaling peptides. Catalyzes the transfer of the initial L-arabinose to the hydroxyl group of Hyp residues. Probably involved in the arabinosylation of CLAVATA3/ESR-related (CLE) signaling peptides that move from root to shoot, to interact with SUNN receptor kinase signaling that regulates nodulation. Involved in long distance nodulation signaling events. Involved in the autoregulation of nodulation (AON), a long distance systemic signaling from root to shoot and back again, which allows legumes to limit the number of root nodules formed based on available nitrogen and previous rhizobial colonization. Functions in the root, upstream of the shoot receptor kinase SUNN and via CLE peptide, to control AON. The sequence is that of Hydroxyproline O-arabinosyltransferase RDN2 from Medicago truncatula (Barrel medic).